The chain runs to 567 residues: MASITRQAYAEMFGPTVGDRLRLADTALVIEIEKDHTIYGEEVKFGGGKVIRDGMGQSQRMAADCADTVITNAVIIDHWGIVKADIAIKNGLIAGIGKAGNPDMQPGVTIVIGPGTEIIAGEGMIVTAGGIDTHIHFICPQQIDEALTSGVTTMIGGGTGPATGTFATTVTPGPWHMERMLQAVDGYPMNIGLLGKGNASQAAPLREQIAAGAIGLKLHEDWGSTPAAIDCCLGVADETDTQVAIHTDTLNEGGFVEATVAAFKGRTIHTYHTEGAGGGHAPDIIKVCGEANVLPSSTNPTRPYTVNTLDEHLDMLMVCHHLDASIAEDIAFAESRIRRETIAAEDVLHDLGAFSMISSDSQAMGRVGEVVLRTWQTAHKMKVQRGSLPGDNARHDNFRVKRYVAKYTINPARTHGIAHVVGSVEVGKLADLVLWRPAFFGVKPSLILKGGSIASAAMGDPNASIPTPQPVHYRPMFAGQGSGVAAASLTFVSQAAQQAGVADRYGLRKRTVAVENCRSVSKRDMVHNDWQPDISVDPETYQVVADGQLLTCEPATELPMAQRYFLF.

Residues 129-567 (GGIDTHIHFI…LPMAQRYFLF (439 aa)) form the Urease domain. Ni(2+)-binding residues include H134, H136, and K217. K217 carries the post-translational modification N6-carboxylysine. A substrate-binding site is contributed by H219. Ni(2+) is bound by residues H246 and H272. The Proton donor role is filled by H320. D360 is a Ni(2+) binding site.

Belongs to the metallo-dependent hydrolases superfamily. Urease alpha subunit family. Heterotrimer of UreA (gamma), UreB (beta) and UreC (alpha) subunits. Three heterotrimers associate to form the active enzyme. It depends on Ni cation as a cofactor. In terms of processing, carboxylation allows a single lysine to coordinate two nickel ions.

The protein resides in the cytoplasm. The enzyme catalyses urea + 2 H2O + H(+) = hydrogencarbonate + 2 NH4(+). The protein operates within nitrogen metabolism; urea degradation; CO(2) and NH(3) from urea (urease route): step 1/1. The polypeptide is Urease subunit alpha (Delftia acidovorans (strain DSM 14801 / SPH-1)).